Consider the following 238-residue polypeptide: 2,3,4,5-tetrahydropyridine-2,6-dicarboxylate N-acetyltransferase (238 aa).

This sequence belongs to the transferase hexapeptide repeat family. DapH subfamily.

It carries out the reaction (S)-2,3,4,5-tetrahydrodipicolinate + acetyl-CoA + H2O = L-2-acetamido-6-oxoheptanedioate + CoA. It participates in amino-acid biosynthesis; L-lysine biosynthesis via DAP pathway; LL-2,6-diaminopimelate from (S)-tetrahydrodipicolinate (acetylase route): step 1/3. Functionally, catalyzes the transfer of an acetyl group from acetyl-CoA to tetrahydrodipicolinate. This chain is 2,3,4,5-tetrahydropyridine-2,6-dicarboxylate N-acetyltransferase, found in Clostridioides difficile (strain 630) (Peptoclostridium difficile).